Reading from the N-terminus, the 435-residue chain is Monodehydroascorbate reductase 2 (435 aa).

FAD contacts are provided by residues 14-17 (GGVA), E41, R48, K53, I96, and 147-148 (RE). NAD(+)-binding positions include 172 to 178 (GGYIGLE), E196, R202, and G261. 174-178 (YIGLE) lines the NADP(+) pocket. R202 and G261 together coordinate NADP(+). Residue D298 participates in FAD binding. NAD(+) is bound at residue 314–315 (EH). NADP(+) is bound at residue 314–315 (EH). An FAD-binding site is contributed by V316. An L-ascorbate-binding site is contributed by R320. Y349 lines the FAD pocket. Y349 contributes to the NAD(+) binding site. Y349 provides a ligand contact to NADP(+). R351 is a binding site for L-ascorbate. S417 carries the post-translational modification Phosphoserine.

It belongs to the FAD-dependent oxidoreductase family. It depends on FAD as a cofactor.

The protein resides in the cytoplasm. It catalyses the reaction 2 monodehydro-L-ascorbate radical + NADH + H(+) = 2 L-ascorbate + NAD(+). Catalyzes the conversion of monodehydroascorbate to ascorbate, oxidizing NADH in the process. This is Monodehydroascorbate reductase 2 from Arabidopsis thaliana (Mouse-ear cress).